A 438-amino-acid polypeptide reads, in one-letter code: GDP-mannose 6-dehydrogenase (438 aa).

The NAD(+) site is built by Tyr10, Val11, Asp30, Lys35, Thr86, and Thr124. The GDP-alpha-D-mannuronate site is built by Glu161, Lys210, Asn214, His217, Asn225, Tyr256, Tyr257, Arg259, Phe262, and Gly265. The active site involves Cys268. Lys271 is an NAD(+) binding site. Lys324 provides a ligand contact to GDP-alpha-D-mannuronate. Arg331 is an NAD(+) binding site.

Belongs to the UDP-glucose/GDP-mannose dehydrogenase family.

It carries out the reaction GDP-alpha-D-mannose + 2 NAD(+) + H2O = GDP-alpha-D-mannuronate + 2 NADH + 3 H(+). It functions in the pathway glycan biosynthesis; alginate biosynthesis. Its function is as follows. Catalyzes the oxidation of guanosine diphospho-D-mannose (GDP-D-mannose) to GDP-D-mannuronic acid, a precursor for alginate polymerization. The alginate layer causes a mucoid phenotype and provides a protective barrier against host immune defenses and antibiotics. This chain is GDP-mannose 6-dehydrogenase (algD), found in Pseudomonas savastanoi pv. phaseolicola (Pseudomonas syringae pv. phaseolicola).